We begin with the raw amino-acid sequence, 406 residues long: Corticosteroid-binding globulin (406 aa).

The N-terminal stretch at 1-22 is a signal peptide; that stretch reads MLLTLYACLLWLSTSGLWTSQA. N-linked (GlcNAc...) asparagine glycosylation is found at Asn95, Asn119, and Asn223. Cortisol is bound at residue Gln253. N-linked (GlcNAc...) asparagine glycosylation is present at Asn259. Cortisol is bound by residues Gln285 and Trp394.

Belongs to the serpin family.

The protein resides in the secreted. Major transport protein for glucocorticoids and progestins in the blood of almost all vertebrate species. This chain is Corticosteroid-binding globulin (Serpina6), found in Sus scrofa (Pig).